The following is a 252-amino-acid chain: Hydrolase phiM (252 aa).

Ser-126 (charge relay system) is an active-site residue.

Belongs to the LovG family.

It functions in the pathway secondary metabolite biosynthesis. Its function is as follows. Hydrolase; part of the gene cluster that mediates the biosynthesis of the antihypercholesterolemic agents phomoidrides which are dimeric anhydrides. Within the pathway, phiM releases the C12-fatty acyl chain from phiA. The pathway begins with the highly reducing polyketide synthase tstA that catalyzes the formation of a C12-fatty acyl-ACP, starting from one acetate and 5 malonate units. The hydrolase tstM is involved in the release of the C12-fatty acyl chain from phiA. The alkylcitrate synthase (ACS) tstJ and the alkylcitrate dehydratase (ACDH) tstI then give rise to decarboxylated monomeric anhydrides by coupling the C12-fatty acyl chain with oxalacetic acid. The cyclase tstC is responsible for the dimerization of the monomeric anhydrides which leads to the production of prephomoidride that contains the characteristic bicyclo[4.3.1]deca-1,6-diene system of phomoidrides. Iterative oxidation catalyzed by the alpha-ketoglutarate-dependent dioxygenase tstK produced then phomoidride A. Finally, the methyltransferase tstE converts phomoidride A to phomoidride B via an acetalization reaction. The phosphatidylethanolamine-binding protein tstB and tstN are not essential for dimerization and their functions have still to be determined. This Talaromyces stipitatus (strain ATCC 10500 / CBS 375.48 / QM 6759 / NRRL 1006) (Penicillium stipitatum) protein is Hydrolase phiM.